A 349-amino-acid chain; its full sequence is Homoserine O-succinyltransferase (349 aa).

C146 functions as the Acyl-thioester intermediate in the catalytic mechanism. Substrate contacts are provided by K167 and S196. The active-site Proton acceptor is the H239. The active site involves E241. Residue R253 coordinates substrate.

This sequence belongs to the MetA family.

The protein resides in the cytoplasm. It carries out the reaction L-homoserine + succinyl-CoA = O-succinyl-L-homoserine + CoA. It functions in the pathway amino-acid biosynthesis; L-methionine biosynthesis via de novo pathway; O-succinyl-L-homoserine from L-homoserine: step 1/1. Its function is as follows. Transfers a succinyl group from succinyl-CoA to L-homoserine, forming succinyl-L-homoserine. In vitro, can also use glutaryl-CoA as acyl donor. In Thiobacillus denitrificans (strain ATCC 25259 / T1), this protein is Homoserine O-succinyltransferase.